Consider the following 409-residue polypeptide: MRVLLSTCGSRGDVEPLVALAVRLRARGAEVRMCAPPDCADRLAEVGVPHLPLGRSARPAAAGEAKPLTAEDMLRFTTETIAMQFDRIPAAAEGCDAVVTTGLLAAALGVRSVAEKLGIPYFYAFHCPSYVPSPYYAPPPPLGEPPAPEGTDIRALWERNNQSAFRRYGAPLKSQRAAIGLPPVEDIFEHGYTDHPWMAADQVLAPLQPTDLDAVQTGAWILPDERPLSPEMEAFLDAGTPPVYLGFGSLRAPADAAKVAIEAIRAHGRRVILSRGWADLVLPDDRDDCFATGEVNQQVLFRRVAAVIHHGGAGTTHVATRAGAPQILVPQIADQPYYAGRVAELGIGVAHDGPTPTFESLSAALTTALAPETRVRAEAVAGTVLTDGAAAAADLLFAAVGEEKPAVPA.

Belongs to the glycosyltransferase 28 family.

It participates in antibiotic biosynthesis; vancomycin biosynthesis. Functionally, D-glucosyltransferase that acts on the aglycone core, transferring D-glucose to the phenolic hydroxyl of OH-Phegly(4) to form a devancoaminyl-vancomycin (DVV) intermediate in the biosynthesis of glycopeptide antibiotic vancomycin. Also able to glycosylate A47934, an antibiotic with a teicoplanin-like heptapeptide, but lacking sugar residues. This is Glycosyltransferase GtfE (gtfE) from Amycolatopsis orientalis (Nocardia orientalis).